The sequence spans 289 residues: Ribosomal RNA small subunit methyltransferase A (289 aa).

Residues asparagine 21, leucine 23, glycine 48, glutamate 69, aspartate 94, and asparagine 120 each coordinate S-adenosyl-L-methionine.

This sequence belongs to the class I-like SAM-binding methyltransferase superfamily. rRNA adenine N(6)-methyltransferase family. RsmA subfamily.

The protein resides in the cytoplasm. It carries out the reaction adenosine(1518)/adenosine(1519) in 16S rRNA + 4 S-adenosyl-L-methionine = N(6)-dimethyladenosine(1518)/N(6)-dimethyladenosine(1519) in 16S rRNA + 4 S-adenosyl-L-homocysteine + 4 H(+). In terms of biological role, specifically dimethylates two adjacent adenosines (A1518 and A1519) in the loop of a conserved hairpin near the 3'-end of 16S rRNA in the 30S particle. May play a critical role in biogenesis of 30S subunits. This Actinobacillus pleuropneumoniae serotype 3 (strain JL03) protein is Ribosomal RNA small subunit methyltransferase A.